The primary structure comprises 169 residues: Transcription antitermination protein NusB (169 aa).

The segment at 1-20 (MAESSNKPFRGPVRANDRKA) is disordered.

It belongs to the NusB family.

Involved in transcription antitermination. Required for transcription of ribosomal RNA (rRNA) genes. Binds specifically to the boxA antiterminator sequence of the ribosomal RNA (rrn) operons. The polypeptide is Transcription antitermination protein NusB (Bradyrhizobium sp. (strain BTAi1 / ATCC BAA-1182)).